A 241-amino-acid polypeptide reads, in one-letter code: 3-deoxy-manno-octulosonate cytidylyltransferase (241 aa).

This sequence belongs to the KdsB family.

The protein localises to the cytoplasm. It carries out the reaction 3-deoxy-alpha-D-manno-oct-2-ulosonate + CTP = CMP-3-deoxy-beta-D-manno-octulosonate + diphosphate. The protein operates within nucleotide-sugar biosynthesis; CMP-3-deoxy-D-manno-octulosonate biosynthesis; CMP-3-deoxy-D-manno-octulosonate from 3-deoxy-D-manno-octulosonate and CTP: step 1/1. It participates in bacterial outer membrane biogenesis; lipopolysaccharide biosynthesis. In terms of biological role, activates KDO (a required 8-carbon sugar) for incorporation into bacterial lipopolysaccharide in Gram-negative bacteria. This is 3-deoxy-manno-octulosonate cytidylyltransferase from Rickettsia typhi (strain ATCC VR-144 / Wilmington).